Reading from the N-terminus, the 397-residue chain is Cytochrome b (397 aa).

4 helical membrane-spanning segments follow: residues F38–M58, W82–F104, V119–V139, and F185–A205. Heme b contacts are provided by H88 and H102. The heme b site is built by H189 and H203. A ubiquinone is bound at residue H208. The next 4 helical transmembrane spans lie at F231 to F251, A295 to K315, I327 to C347, and F354 to P373.

The protein belongs to the cytochrome b family. In terms of assembly, the main subunits of complex b-c1 are: cytochrome b, cytochrome c1 and the Rieske protein. Heme b serves as cofactor.

The protein localises to the mitochondrion inner membrane. Component of the ubiquinol-cytochrome c reductase complex (complex III or cytochrome b-c1 complex) that is part of the mitochondrial respiratory chain. The b-c1 complex mediates electron transfer from ubiquinol to cytochrome c. Contributes to the generation of a proton gradient across the mitochondrial membrane that is then used for ATP synthesis. In Oryza sativa subsp. indica (Rice), this protein is Cytochrome b (MT-CYB).